Consider the following 146-residue polypeptide: Putative esterase DR_2321 (146 aa).

The protein belongs to the thioesterase PaaI family.

This is Putative esterase DR_2321 from Deinococcus radiodurans (strain ATCC 13939 / DSM 20539 / JCM 16871 / CCUG 27074 / LMG 4051 / NBRC 15346 / NCIMB 9279 / VKM B-1422 / R1).